Reading from the N-terminus, the 247-residue chain is Adenosylcobinamide-GDP ribazoletransferase (247 aa).

Helical transmembrane passes span 34 to 54 (IVMF…IFIL), 59 to 79 (CGIP…TGGF), 113 to 133 (GGLA…ELAL), 138 to 158 (VLAA…LLMY), and 194 to 214 (VLLP…AIFI).

It belongs to the CobS family. Mg(2+) serves as cofactor.

It is found in the cell inner membrane. The catalysed reaction is alpha-ribazole + adenosylcob(III)inamide-GDP = adenosylcob(III)alamin + GMP + H(+). The enzyme catalyses alpha-ribazole 5'-phosphate + adenosylcob(III)inamide-GDP = adenosylcob(III)alamin 5'-phosphate + GMP + H(+). It functions in the pathway cofactor biosynthesis; adenosylcobalamin biosynthesis; adenosylcobalamin from cob(II)yrinate a,c-diamide: step 7/7. In terms of biological role, joins adenosylcobinamide-GDP and alpha-ribazole to generate adenosylcobalamin (Ado-cobalamin). Also synthesizes adenosylcobalamin 5'-phosphate from adenosylcobinamide-GDP and alpha-ribazole 5'-phosphate. The polypeptide is Adenosylcobinamide-GDP ribazoletransferase (Salmonella arizonae (strain ATCC BAA-731 / CDC346-86 / RSK2980)).